Reading from the N-terminus, the 247-residue chain is Phycocyanobilin:ferredoxin oxidoreductase (247 aa).

This sequence belongs to the HY2 family.

It carries out the reaction (2R,3Z)-phycocyanobilin + 4 oxidized [2Fe-2S]-[ferredoxin] = biliverdin IXalpha + 4 reduced [2Fe-2S]-[ferredoxin] + 4 H(+). Catalyzes the four-electron reduction of biliverdin IX-alpha (2-electron reduction at both the A and D rings); the reaction proceeds via an isolatable 2-electron intermediate, 181,182-dihydrobiliverdin. This Prochlorococcus marinus (strain SARG / CCMP1375 / SS120) protein is Phycocyanobilin:ferredoxin oxidoreductase (pcyA).